The following is a 303-amino-acid chain: MRLFNWRRQAVLNAMPLVKPDQVRTPWHEFWRRFRRQHMAMTAALFVILLIVVAIFARWIAPYDAENYFDYDNLNNGPSLQHWFGVDSLGRDIFSRVLVGAQISLAAGVFAVFIGAAIGTLLGLLAGYYEGWWDRLIMRICDVLFAFPGILLAIAVVAVLGSGIANVIIAVAIFSIPAFARLVRGNTLVLKQQTFIESARSIGASDMTVLLRHILPGTVSSIVVFFTMRIGTSIISAASLSFLGLGAQPPTPEWGAMLDEARADMVIAPHVAVFPVLAIFLTVLAFNLLGDGLRDALDPKIKG.

A run of 6 helical transmembrane segments spans residues 40–60 (AMTA…ARWI), 105–125 (LAAG…LGLL), 144–164 (LFAF…GSGI), 165–185 (ANVI…LVRG), 222–242 (IVVF…SLSF), and 266–286 (VIAP…VLAF). An ABC transmembrane type-1 domain is found at 101 to 290 (AQISLAAGVF…LTVLAFNLLG (190 aa)).

The protein belongs to the binding-protein-dependent transport system permease family. In terms of assembly, the complex is composed of two ATP-binding proteins (GsiA), two transmembrane proteins (GsiC and GsiD) and a solute-binding protein (GsiB).

The protein resides in the cell inner membrane. Part of the ABC transporter complex GsiABCD involved in glutathione import. Probably responsible for the translocation of the substrate across the membrane. The sequence is that of Glutathione transport system permease protein GsiD from Shigella dysenteriae serotype 1 (strain Sd197).